The following is a 156-amino-acid chain: Ribosomal RNA large subunit methyltransferase H (156 aa).

Residues leucine 73, glycine 104, and 123-128 (ISSMTL) contribute to the S-adenosyl-L-methionine site.

It belongs to the RNA methyltransferase RlmH family. In terms of assembly, homodimer.

The protein localises to the cytoplasm. It carries out the reaction pseudouridine(1915) in 23S rRNA + S-adenosyl-L-methionine = N(3)-methylpseudouridine(1915) in 23S rRNA + S-adenosyl-L-homocysteine + H(+). Specifically methylates the pseudouridine at position 1915 (m3Psi1915) in 23S rRNA. This chain is Ribosomal RNA large subunit methyltransferase H, found in Burkholderia cenocepacia (strain ATCC BAA-245 / DSM 16553 / LMG 16656 / NCTC 13227 / J2315 / CF5610) (Burkholderia cepacia (strain J2315)).